A 198-amino-acid polypeptide reads, in one-letter code: Septum-promoting GTP-binding protein 1 (198 aa).

The tract at residues 6–198 (KNNVTIKVGM…GDPILEYIDR (193 aa)) is small GTPase-like. Residues 17–24 (GDSSIGKT), 65–69 (DLGGQ), and 122–125 (TKYD) each bind GTP.

As to quaternary structure, interacts with cdc7 and cdc11.

Its function is as follows. GTP-binding protein essential for the induction of septum formation at G2 and pre-START stages of mitosis. Acts via the cdc7 protein kinase pathway. The chain is Septum-promoting GTP-binding protein 1 (spg1) from Schizosaccharomyces pombe (strain 972 / ATCC 24843) (Fission yeast).